Reading from the N-terminus, the 129-residue chain is Protein yippee-like At5g53940 (129 aa).

The 98-residue stretch at 12–109 (RSYRCRFCRT…LERGRIVDEI (98 aa)) folds into the Yippee domain. Zn(2+) is bound by residues Cys16, Cys19, Cys72, and Cys75.

The protein belongs to the yippee family.

The chain is Protein yippee-like At5g53940 from Arabidopsis thaliana (Mouse-ear cress).